The following is a 206-amino-acid chain: Venom allergen 5 2 (206 aa).

Intrachain disulfides connect Cys4–Cys16, Cys8–Cys104, Cys28–Cys96, and Cys172–Cys189. The SCP domain maps to 48–191; that stretch reads DEHNRFRQKV…MKSHYLVCNY (144 aa).

It belongs to the CRISP family. Venom allergen 5-like subfamily. Expressed by the venom gland.

The protein localises to the secreted. The polypeptide is Venom allergen 5 2 (Polybia paulista (Neotropical social wasp)).